The primary structure comprises 433 residues: Pyrimidine-nucleoside phosphorylase (433 aa).

81 to 83 (KHS) contributes to the phosphate binding site. Positions 88 and 90 each coordinate K(+). Phosphate contacts are provided by residues Thr-92, 108–110 (KMS), and Thr-120. Substrate contacts are provided by Arg-168 and Lys-187. The K(+) site is built by Leu-243, Ala-246, and Glu-255.

The protein belongs to the thymidine/pyrimidine-nucleoside phosphorylase family. In terms of assembly, homodimer. It depends on K(+) as a cofactor.

The catalysed reaction is uridine + phosphate = alpha-D-ribose 1-phosphate + uracil. It catalyses the reaction thymidine + phosphate = 2-deoxy-alpha-D-ribose 1-phosphate + thymine. It carries out the reaction 2'-deoxyuridine + phosphate = 2-deoxy-alpha-D-ribose 1-phosphate + uracil. In terms of biological role, catalyzes phosphorolysis of the pyrimidine nucleosides uridine, thymidine and 2'-deoxyuridine with the formation of the corresponding pyrimidine base and ribose-1-phosphate. This Staphylococcus epidermidis (strain ATCC 35984 / DSM 28319 / BCRC 17069 / CCUG 31568 / BM 3577 / RP62A) protein is Pyrimidine-nucleoside phosphorylase (pdp).